The following is a 225-amino-acid chain: Guanylate kinase (225 aa).

A Guanylate kinase-like domain is found at 20 to 198 (GNLFMVVAPS…ALSELQCLVA (179 aa)). Position 27-34 (27-34 (APSGAGKS)) interacts with ATP.

The protein belongs to the guanylate kinase family.

The protein resides in the cytoplasm. The enzyme catalyses GMP + ATP = GDP + ADP. In terms of biological role, essential for recycling GMP and indirectly, cGMP. This chain is Guanylate kinase, found in Paraburkholderia xenovorans (strain LB400).